Consider the following 92-residue polypeptide: Large ribosomal subunit protein bL28 (92 aa).

The protein belongs to the bacterial ribosomal protein bL28 family.

This chain is Large ribosomal subunit protein bL28, found in Borrelia hermsii (strain HS1 / DAH).